A 232-amino-acid polypeptide reads, in one-letter code: Thiamine import ATP-binding protein ThiQ (232 aa).

Positions 2-230 (LKLTDITWLY…KASASALLGI (229 aa)) constitute an ABC transporter domain. Residue 32–39 (GPSGAGKS) coordinates ATP.

The protein belongs to the ABC transporter superfamily. Thiamine importer (TC 3.A.1.19.1) family. The complex is composed of two ATP-binding proteins (ThiQ), two transmembrane proteins (ThiP) and a solute-binding protein (ThiB).

The protein localises to the cell inner membrane. The catalysed reaction is thiamine(out) + ATP + H2O = thiamine(in) + ADP + phosphate + H(+). Its function is as follows. Part of the ABC transporter complex ThiBPQ involved in thiamine import. Responsible for energy coupling to the transport system. The polypeptide is Thiamine import ATP-binding protein ThiQ (Escherichia coli O6:K15:H31 (strain 536 / UPEC)).